The primary structure comprises 478 residues: Protein nucleotidyltransferase YdiU (478 aa).

ATP contacts are provided by glycine 84, glycine 86, arginine 87, lysine 107, aspartate 119, glycine 120, arginine 170, and arginine 177. Residue aspartate 246 is the Proton acceptor of the active site. Positions 247 and 256 each coordinate Mg(2+). Aspartate 256 provides a ligand contact to ATP.

Belongs to the SELO family. Mg(2+) serves as cofactor. It depends on Mn(2+) as a cofactor.

It catalyses the reaction L-seryl-[protein] + ATP = 3-O-(5'-adenylyl)-L-seryl-[protein] + diphosphate. It carries out the reaction L-threonyl-[protein] + ATP = 3-O-(5'-adenylyl)-L-threonyl-[protein] + diphosphate. The catalysed reaction is L-tyrosyl-[protein] + ATP = O-(5'-adenylyl)-L-tyrosyl-[protein] + diphosphate. The enzyme catalyses L-histidyl-[protein] + UTP = N(tele)-(5'-uridylyl)-L-histidyl-[protein] + diphosphate. It catalyses the reaction L-seryl-[protein] + UTP = O-(5'-uridylyl)-L-seryl-[protein] + diphosphate. It carries out the reaction L-tyrosyl-[protein] + UTP = O-(5'-uridylyl)-L-tyrosyl-[protein] + diphosphate. Its function is as follows. Nucleotidyltransferase involved in the post-translational modification of proteins. It can catalyze the addition of adenosine monophosphate (AMP) or uridine monophosphate (UMP) to a protein, resulting in modifications known as AMPylation and UMPylation. The sequence is that of Protein nucleotidyltransferase YdiU from Escherichia coli O81 (strain ED1a).